Here is a 126-residue protein sequence, read N- to C-terminus: Profilin-1 (126 aa).

It belongs to the profilin family. In terms of assembly, occurs in many kinds of cells as a complex with monomeric actin in a 1:1 ratio.

Its subcellular location is the cytoplasm. The protein localises to the cytoskeleton. In terms of biological role, binds to actin and affects the structure of the cytoskeleton. At high concentrations, profilin prevents the polymerization of actin, whereas it enhances it at low concentrations. By binding to PIP2, it inhibits the formation of IP3 and DG. This is Profilin-1 (proA) from Dictyostelium discoideum (Social amoeba).